The following is a 37-amino-acid chain: Large ribosomal subunit protein bL36c (37 aa).

The protein belongs to the bacterial ribosomal protein bL36 family.

Its subcellular location is the plastid. The protein resides in the chloroplast. The chain is Large ribosomal subunit protein bL36c (rpl36) from Nephroselmis olivacea (Green alga).